We begin with the raw amino-acid sequence, 356 residues long: S-adenosylmethionine:tRNA ribosyltransferase-isomerase (356 aa).

This sequence belongs to the QueA family. As to quaternary structure, monomer.

The protein resides in the cytoplasm. It catalyses the reaction 7-aminomethyl-7-carbaguanosine(34) in tRNA + S-adenosyl-L-methionine = epoxyqueuosine(34) in tRNA + adenine + L-methionine + 2 H(+). It functions in the pathway tRNA modification; tRNA-queuosine biosynthesis. In terms of biological role, transfers and isomerizes the ribose moiety from AdoMet to the 7-aminomethyl group of 7-deazaguanine (preQ1-tRNA) to give epoxyqueuosine (oQ-tRNA). In Cronobacter sakazakii (strain ATCC BAA-894) (Enterobacter sakazakii), this protein is S-adenosylmethionine:tRNA ribosyltransferase-isomerase.